Reading from the N-terminus, the 118-residue chain is Cell division topological specificity factor (118 aa).

Residues 86–118 form a disordered region; that stretch reads RSQAKAVSSQENGASSQEAVSSQESVSTPGAME. The segment covering 99–112 has biased composition (low complexity); it reads ASSQEAVSSQESVS.

It belongs to the MinE family.

Its function is as follows. Prevents the cell division inhibition by proteins MinC and MinD at internal division sites while permitting inhibition at polar sites. This ensures cell division at the proper site by restricting the formation of a division septum at the midpoint of the long axis of the cell. This is Cell division topological specificity factor from Prochlorococcus marinus (strain MIT 9313).